The chain runs to 263 residues: Glucosamine-6-phosphate deaminase (263 aa).

The Proton acceptor; for enolization step role is filled by Asp-72. The For ring-opening step role is filled by Asp-141. His-143 acts as the Proton acceptor; for ring-opening step in catalysis. Residue Glu-148 is the For ring-opening step of the active site.

This sequence belongs to the glucosamine/galactosamine-6-phosphate isomerase family. NagB subfamily.

The enzyme catalyses alpha-D-glucosamine 6-phosphate + H2O = beta-D-fructose 6-phosphate + NH4(+). It participates in amino-sugar metabolism; N-acetylneuraminate degradation; D-fructose 6-phosphate from N-acetylneuraminate: step 5/5. Allosterically activated by N-acetylglucosamine 6-phosphate (GlcNAc6P). Functionally, catalyzes the reversible isomerization-deamination of glucosamine 6-phosphate (GlcN6P) to form fructose 6-phosphate (Fru6P) and ammonium ion. The sequence is that of Glucosamine-6-phosphate deaminase from Porphyromonas gingivalis (strain ATCC 33277 / DSM 20709 / CIP 103683 / JCM 12257 / NCTC 11834 / 2561).